Consider the following 212-residue polypeptide: Large ribosomal subunit protein uL3 (212 aa).

The segment at 129–156 (RRGPMGHGSKNHRAPGSTGAGTTPGRIY) is disordered. Residues 142–153 (APGSTGAGTTPG) are compositionally biased toward low complexity.

The protein belongs to the universal ribosomal protein uL3 family. In terms of assembly, part of the 50S ribosomal subunit. Forms a cluster with proteins L14 and L19.

Its function is as follows. One of the primary rRNA binding proteins, it binds directly near the 3'-end of the 23S rRNA, where it nucleates assembly of the 50S subunit. This Acaryochloris marina (strain MBIC 11017) protein is Large ribosomal subunit protein uL3.